The sequence spans 106 residues: UPF0145 protein SCO3412 (106 aa).

This sequence belongs to the UPF0145 family.

This is UPF0145 protein SCO3412 from Streptomyces coelicolor (strain ATCC BAA-471 / A3(2) / M145).